A 479-amino-acid chain; its full sequence is Ribosomal RNA small subunit methyltransferase F (479 aa).

Residues 125–131 (AAAPGSK), glutamate 149, glycine 177, and aspartate 194 contribute to the S-adenosyl-L-methionine site. Catalysis depends on cysteine 247, which acts as the Nucleophile.

Belongs to the class I-like SAM-binding methyltransferase superfamily. RsmB/NOP family.

The protein resides in the cytoplasm. It carries out the reaction cytidine(1407) in 16S rRNA + S-adenosyl-L-methionine = 5-methylcytidine(1407) in 16S rRNA + S-adenosyl-L-homocysteine + H(+). Specifically methylates the cytosine at position 1407 (m5C1407) of 16S rRNA. The protein is Ribosomal RNA small subunit methyltransferase F of Shigella flexneri serotype 5b (strain 8401).